Reading from the N-terminus, the 743-residue chain is Pentatricopeptide repeat-containing protein At2g16880 (743 aa).

PPR repeat units lie at residues 130-164 (SKAL…KLKP), 165-202 (NLLT…GVSL), 203-233 (NVQT…MVSE), 239-273 (DNVT…GLVP), 274-308 (NRVT…NVLP), 309-343 (DLCT…KLQP), 344-378 (DVVT…GVKA), 379-414 (NQVT…GFSP), 415-449 (DIVT…GIKM), 450-484 (NTIT…GFIV), 485-519 (DEVT…KITP), 520-554 (TVST…GLLP), 555-589 (DDST…SFKP), 590-620 (DNYT…LIEE), 624-658 (DTVT…GLEP), and 659-689 (DRFT…FSGK).

The protein belongs to the PPR family. P subfamily.

This is Pentatricopeptide repeat-containing protein At2g16880 from Arabidopsis thaliana (Mouse-ear cress).